The following is a 566-amino-acid chain: Glucose starvation modulator protein 1 (566 aa).

Residues 20-48 constitute a DNA-binding region (zn(2)-C6 fungal-type); sequence CVFCHQKHLQCSNERPCKNCVKRNIAHGC. 2 disordered regions span residues 63–92 and 250–270; these read GVPG…SPMD and KQAS…NTLS. The segment covering 253–270 has biased composition (low complexity); sequence SPSPSNTSTSENNTNTLS.

It belongs to the ERT1/acuK family.

It localises to the nucleus. Functionally, transcription factor which regulates nonfermentable carbon utilization. The chain is Glucose starvation modulator protein 1 (GSM1) from Candida albicans (strain WO-1) (Yeast).